A 1147-amino-acid chain; its full sequence is PDZ domain-containing protein 8 (1147 aa).

A helical membrane pass occupies residues 2–24; the sequence is GLLLLILASAVLGSFLTLLAQFL. Residues 87 to 293 form the SMP-LTD domain; the sequence is APPTLETCYF…LPSYKIRFKP (207 aa). The PDZ domain maps to 365–448; that stretch reads TVELIKGNLQ…RVLVYYQRPA (84 aa). Phosphoserine is present on residues S490, S515, and S532. Residues 504–673 form a disordered region; it reads ELKEETQPLS…DSSDDPQMWE (170 aa). Over residues 510-524 the composition is skewed to polar residues; sequence QPLSHSPKRTPTTLS. The segment covering 557–576 has biased composition (polar residues); that stretch reads KPSTLKTSETTEAAQVSKPQ. Residues 580–596 show a composition bias toward pro residues; the sequence is FKPPVPPRPQGRVPLPP. Residues 833–884 form a Phorbol-ester/DAG-type zinc finger; the sequence is KHSFQDTQFQNPTWCDYCKKKVWTKAASQCMFCAYVCHKKCQEKCLAETPLC. The segment at 948–990 is disordered; the sequence is RLSEPGTDLVEPSPKHTPNTSDNEGSDTEVCGSNSPSKRGNSA. Phosphoserine is present on residues S960 and S973. Residues 978-987 show a composition bias toward polar residues; sequence CGSNSPSKRG. Residues 1021–1056 are a coiled coil; that stretch reads PTEERIQKLEFMLDKLQNEIDQELEHNNSLVREEKE. Positions 1126–1137 are enriched in polar residues; that stretch reads QLIDSQPFSNIS. The disordered stretch occupies residues 1126–1147; sequence QLIDSQPFSNISDDLFGPSESV.

As to quaternary structure, interacts with MSN.

The protein resides in the endoplasmic reticulum membrane. Molecular tethering protein that connects endoplasmic reticulum and mitochondria membranes. PDZD8-dependent endoplasmic reticulum-mitochondria membrane tethering is essential for endoplasmic reticulum-mitochondria Ca(2+) transfer. In neurons, involved in the regulation of dendritic Ca(2+) dynamics by regulating mitochondrial Ca(2+) uptake in neurons. The polypeptide is PDZ domain-containing protein 8 (Mus musculus (Mouse)).